We begin with the raw amino-acid sequence, 219 residues long: uncharacterized protein (219 aa).

Over residues 139 to 154 (PRKIKQKKKTKKKRPS) the composition is skewed to basic residues. The disordered stretch occupies residues 139–160 (PRKIKQKKKTKKKRPSKSAPKT). The LysM domain maps to 159–217 (KTYTVKKGDTLWDLAGKFYGDSTKWRKIWKVNKKAMIKRSKRNIRQPGHWIFPGQKLKI).

This is an uncharacterized protein from Bacillus subtilis (strain 168).